A 2727-amino-acid chain; its full sequence is E3 ubiquitin-protein ligase Ufd4 (2727 aa).

Disordered stretches follow at residues 247–271 and 365–389; these read THSS…TNSD and RGSN…TDRT. Over residues 365 to 374 the composition is skewed to polar residues; the sequence is RGSNNPNQGQ. 3 ANK repeats span residues 422–451, 453–482, and 486–518; these read VGQT…DVNK, QRSS…YPDL, and DGKT…WMSP. Residues 682–702 are disordered; it reads AQRSSTSVVVAPRPTSDDPME. An MIB/HERC2 domain is found at 1322–1392; sequence QIRAQLKHMT…KYDLKLADCE (71 aa). 2 stretches are compositionally biased toward polar residues: residues 1401–1430 and 1437–1448; these read QSMG…STPS and KNQNPEGASNQT. Disordered regions lie at residues 1401-1448, 1483-1512, 1570-1592, 1845-1871, 1905-1930, and 2092-2115; these read QSMG…SNQT, NTSS…GPSP, ESVT…REND, YPSL…QQSA, ALLG…DEYE, and STCL…ASTL. Positions 1575-1592 are enriched in low complexity; that stretch reads SQSSSHPDVQSSSPREND. The segment covering 1909 to 1930 has biased composition (acidic residues); sequence DLDDEDDMDEDNDEEENEDEYE. Over residues 2104 to 2115 the composition is skewed to polar residues; that stretch reads PDVSSKSGASTL. In terms of domain architecture, HECT spans 2289–2727; the sequence is RKSVLEVEFL…ATKEKGFHLN (439 aa). The active-site Glycyl thioester intermediate is the Cys2696.

It belongs to the UPL family. K-HECT subfamily.

The enzyme catalyses S-ubiquitinyl-[E2 ubiquitin-conjugating enzyme]-L-cysteine + [acceptor protein]-L-lysine = [E2 ubiquitin-conjugating enzyme]-L-cysteine + N(6)-ubiquitinyl-[acceptor protein]-L-lysine.. It participates in protein modification; protein ubiquitination. E3 ubiquitin-protein ligase which accepts ubiquitin from an E2 ubiquitin-conjugating enzyme in the form of a thioester and then directly transfers the ubiquitin to targeted substrates. Involved in the negative regulation of the Ras/MAPK signaling pathway in the wing by acting with the E2 enzyme Unc6 and the putative E3 ligases poe and Kcmf1 to mediate the ubiquitination and proteasomal degradation of rl/MAPK. The polypeptide is E3 ubiquitin-protein ligase Ufd4 (Drosophila melanogaster (Fruit fly)).